The sequence spans 35 residues: Trypsin inhibitor 1 (35 aa).

3 disulfide bridges follow: Cys2–Cys19, Cys9–Cys23, and Cys18–Cys34.

In terms of biological role, trypsin inhibitor. The protein is Trypsin inhibitor 1 of Spinacia oleracea (Spinach).